Reading from the N-terminus, the 334-residue chain is Galactinol synthase 3 (334 aa).

Lys-97 is an active-site residue. The Mn(2+) site is built by Asp-113, Asp-115, and His-251.

Belongs to the glycosyltransferase 8 family. Galactosyltransferase subfamily. It depends on a divalent metal cation as a cofactor.

It localises to the cytoplasm. The enzyme catalyses myo-inositol + UDP-alpha-D-galactose = alpha-D-galactosyl-(1-&gt;3)-1D-myo-inositol + UDP + H(+). Galactinol synthase involved in the biosynthesis of raffinose family oligosaccharides (RFOs) that function as osmoprotectants. May promote plant stress tolerance. In Arabidopsis thaliana (Mouse-ear cress), this protein is Galactinol synthase 3 (GOLS3).